A 365-amino-acid polypeptide reads, in one-letter code: Flagellar P-ring protein (365 aa).

The first 19 residues, 1–19 (MIKFLSALILLLVITAAQA), serve as a signal peptide directing secretion.

It belongs to the FlgI family. The basal body constitutes a major portion of the flagellar organelle and consists of four rings (L,P,S, and M) mounted on a central rod.

The protein localises to the periplasm. Its subcellular location is the bacterial flagellum basal body. Assembles around the rod to form the L-ring and probably protects the motor/basal body from shearing forces during rotation. The protein is Flagellar P-ring protein of Escherichia coli O81 (strain ED1a).